The sequence spans 270 residues: Glutamate racemase (270 aa).

Substrate-binding positions include 7 to 8 (DS) and 39 to 40 (YG). Cysteine 70 serves as the catalytic Proton donor/acceptor. Position 71-72 (71-72 (NT)) interacts with substrate. Cysteine 194 functions as the Proton donor/acceptor in the catalytic mechanism. Substrate is bound at residue 195–196 (TH).

It belongs to the aspartate/glutamate racemases family.

It carries out the reaction L-glutamate = D-glutamate. The protein operates within cell wall biogenesis; peptidoglycan biosynthesis. In terms of biological role, provides the (R)-glutamate required for cell wall biosynthesis. The protein is Glutamate racemase of Cereibacter sphaeroides (strain ATCC 17023 / DSM 158 / JCM 6121 / CCUG 31486 / LMG 2827 / NBRC 12203 / NCIMB 8253 / ATH 2.4.1.) (Rhodobacter sphaeroides).